The following is a 437-amino-acid chain: tRNA(Ile)-lysidine synthase (437 aa).

22–27 (SGGLDS) contacts ATP.

This sequence belongs to the tRNA(Ile)-lysidine synthase family.

The protein resides in the cytoplasm. The enzyme catalyses cytidine(34) in tRNA(Ile2) + L-lysine + ATP = lysidine(34) in tRNA(Ile2) + AMP + diphosphate + H(+). Ligates lysine onto the cytidine present at position 34 of the AUA codon-specific tRNA(Ile) that contains the anticodon CAU, in an ATP-dependent manner. Cytidine is converted to lysidine, thus changing the amino acid specificity of the tRNA from methionine to isoleucine. The chain is tRNA(Ile)-lysidine synthase from Xylella fastidiosa (strain 9a5c).